Consider the following 191-residue polypeptide: UPF0398 protein LCABL_17010 (191 aa).

It belongs to the UPF0398 family.

In Lacticaseibacillus casei (strain BL23) (Lactobacillus casei), this protein is UPF0398 protein LCABL_17010.